Consider the following 277-residue polypeptide: Diaminopimelate epimerase (277 aa).

Residues Asn13, Gln46, and Asn66 each contribute to the substrate site. Catalysis depends on Cys75, which acts as the Proton donor. Residues 76 to 77, Asn160, Asn193, and 211 to 212 each bind substrate; these read GN and ER. Cys220 serves as the catalytic Proton acceptor. Position 221 to 222 (221 to 222) interacts with substrate; sequence GT.

The protein belongs to the diaminopimelate epimerase family. In terms of assembly, homodimer.

Its subcellular location is the cytoplasm. The enzyme catalyses (2S,6S)-2,6-diaminopimelate = meso-2,6-diaminopimelate. It participates in amino-acid biosynthesis; L-lysine biosynthesis via DAP pathway; DL-2,6-diaminopimelate from LL-2,6-diaminopimelate: step 1/1. In terms of biological role, catalyzes the stereoinversion of LL-2,6-diaminopimelate (L,L-DAP) to meso-diaminopimelate (meso-DAP), a precursor of L-lysine and an essential component of the bacterial peptidoglycan. This chain is Diaminopimelate epimerase, found in Saccharophagus degradans (strain 2-40 / ATCC 43961 / DSM 17024).